The chain runs to 405 residues: Patatin-like protein 2 (405 aa).

A PNPLA domain is found at 24–230 (LSIDGGGVRG…AANNPTLCAM (207 aa)). Positions 28–33 (GGGVRG) match the GXGXXG motif. The GXSXG signature appears at 66–70 (GTSTG). The Nucleophile role is filled by Ser-68. Asp-217 serves as the catalytic Proton acceptor. The DGA/G signature appears at 217 to 219 (DGG).

It belongs to the patatin family.

In terms of biological role, possesses non-specific lipolytic acyl hydrolase (LAH) activity. Hydrolyzes phospholipids as well as galactolipids. May play a role in disease resistance. This is Patatin-like protein 2 (PLP2) from Oryza sativa subsp. indica (Rice).